We begin with the raw amino-acid sequence, 236 residues long: Small ribosomal subunit protein uS2c (236 aa).

Belongs to the universal ribosomal protein uS2 family.

The protein resides in the plastid. It localises to the chloroplast. This chain is Small ribosomal subunit protein uS2c (rps2), found in Calycanthus floridus var. glaucus (Eastern sweetshrub).